The sequence spans 391 residues: Histidinol-phosphate aminotransferase (391 aa).

Residue Lys-246 is modified to N6-(pyridoxal phosphate)lysine.

Belongs to the class-II pyridoxal-phosphate-dependent aminotransferase family. Histidinol-phosphate aminotransferase subfamily. Requires pyridoxal 5'-phosphate as cofactor.

The enzyme catalyses L-histidinol phosphate + 2-oxoglutarate = 3-(imidazol-4-yl)-2-oxopropyl phosphate + L-glutamate. Its pathway is amino-acid biosynthesis; L-histidine biosynthesis; L-histidine from 5-phospho-alpha-D-ribose 1-diphosphate: step 7/9. This chain is Histidinol-phosphate aminotransferase, found in Methanopyrus kandleri (strain AV19 / DSM 6324 / JCM 9639 / NBRC 100938).